The sequence spans 598 residues: Arylsulfate sulfotransferase AssT (598 aa).

Residues 1–27 (MFHPYRKTLLSGTVALALGLFATGAIA) form the signal peptide. H279 and H383 together coordinate 4-methylumbelliferone. Residues C445 and C451 are joined by a disulfide bond. H463 serves as a coordination point for 4-methylumbelliferone. H463 functions as the Nucleophile; sulfurylated histidine covalent intermediate in the catalytic mechanism.

This sequence belongs to the aryl sulfotransferase family. As to quaternary structure, monomer.

It is found in the periplasm. The catalysed reaction is an aryl sulfate + a phenol = an aryl sulfate + a phenol. The enzyme catalyses 4-methylumbelliferone sulfate + phenol = phenyl sulfate + 4-methylumbelliferone. It carries out the reaction 2-naphthyl sulfate + phenol = phenyl sulfate + 2-naphthol. In terms of biological role, catalyzes the transfer of a sulfate group from a phenyl sulfate ester to other phenolic compounds. Is able to use several substrate donors and acceptors in vitro: using phenol as an acceptor substrate, 4-methylumbelliferyl sulfate is the best donor substrate, followed by beta-naphthyl sulfate, p-nitrophenyl sulfate (PNS), and alpha-naphthyl sulfate; using PNS as a donor substrate, alpha-naphthol is the best acceptor substrate, followed by phenol, resorcinol, p-acetaminophen, tyramine, and tyrosine. Cannot use 3'-phosphoadenosine-5'-phophosulfate (PAPS), the donor substrate of mammalian sulfotransferase. May be a detoxifying enzyme, converting toxic phenolic compounds into non-toxic materials. The protein is Arylsulfate sulfotransferase AssT of Lelliottia amnigena (Enterobacter amnigenus).